A 130-amino-acid polypeptide reads, in one-letter code: MAKPVEKKTKKKIKRVITDGVAHVHASFNNTIVTITDRQGNALSWATSGGAGFRGSRKSTPFAAQVAAEKAGRAALDYGVKSLEVRIKGPGPGRESAVRSLNNVGYKITNIIDVTPIPHNGCRPPKKRRV.

This sequence belongs to the universal ribosomal protein uS11 family. In terms of assembly, part of the 30S ribosomal subunit. Interacts with proteins S7 and S18. Binds to IF-3.

Located on the platform of the 30S subunit, it bridges several disparate RNA helices of the 16S rRNA. Forms part of the Shine-Dalgarno cleft in the 70S ribosome. This chain is Small ribosomal subunit protein uS11, found in Xanthomonas oryzae pv. oryzae (strain MAFF 311018).